Reading from the N-terminus, the 786-residue chain is Phenylalanine--tRNA ligase beta subunit (786 aa).

One can recognise a tRNA-binding domain in the interval 39–150; sequence LRAPDRVVVG…GELKLGKPLH (112 aa). The 78-residue stretch at 397–474 folds into the B5 domain; it reads YKPATITVDL…RLLGIDTILA (78 aa). Positions 452, 458, 461, and 462 each coordinate Mg(2+). The region spanning 693 to 786 is the FDX-ACB domain; it reads SKFPKLQRDL…LNHRFGAKLR (94 aa).

The protein belongs to the phenylalanyl-tRNA synthetase beta subunit family. Type 1 subfamily. In terms of assembly, tetramer of two alpha and two beta subunits. Mg(2+) is required as a cofactor.

It is found in the cytoplasm. It catalyses the reaction tRNA(Phe) + L-phenylalanine + ATP = L-phenylalanyl-tRNA(Phe) + AMP + diphosphate + H(+). The protein is Phenylalanine--tRNA ligase beta subunit of Wolinella succinogenes (strain ATCC 29543 / DSM 1740 / CCUG 13145 / JCM 31913 / LMG 7466 / NCTC 11488 / FDC 602W) (Vibrio succinogenes).